Reading from the N-terminus, the 374-residue chain is MNALFIIIFMIVVGAIIGGITNVIAIRMLFHPFKPYYIFKFRVPFTPGLIPKRREEIATKIGQVIEEHLLTETLINEKLKSEQSQQAIESMIQQQLQKLTKDQLSIKQITSQIDIDLEQVLQTNGNQYIESQLNNYYTKHQNQTIASLLPNQLVTFLNQHVDNATDLLCDRARNYLSSAKGTQDINDMLDTFFNEKGKLIGMLQMFMTKESIADRIQQELIRLTSHPKARTIVTSLITNEYQTFKDKPLNELLDASQFNEIAENLSVYVTTYASKQANKPVVTLMPQFVDYLEGQLSSKLANLIIEKLSIHLSTIMKKVDLRGLIEEQINTFDLDYIEKLIIEIANKELKLIMSLGFILGGIIGFFQGLVAIFV.

Transmembrane regions (helical) follow at residues 4–24 and 354–374; these read LFII…TNVI and SLGF…AIFV.

The protein belongs to the UPF0754 family.

The protein resides in the cell membrane. The polypeptide is UPF0754 membrane protein NWMN_1738 (Staphylococcus aureus (strain Newman)).